Reading from the N-terminus, the 427-residue chain is UPF0229 protein YeaH (427 aa).

The disordered stretch occupies residues 84–110; that stretch reads QSDRIERPQGGGGGSGSGQGQASQDGE. Positions 92 to 102 are enriched in gly residues; it reads QGGGGGSGSGQ.

This sequence belongs to the UPF0229 family.

In Escherichia fergusonii (strain ATCC 35469 / DSM 13698 / CCUG 18766 / IAM 14443 / JCM 21226 / LMG 7866 / NBRC 102419 / NCTC 12128 / CDC 0568-73), this protein is UPF0229 protein YeaH.